The chain runs to 588 residues: Nuclear hormone receptor family member nhr-23 (588 aa).

Residues 50–73 (LHAKSSLQPSLSIETPKSKENDES) are disordered. Over residues 52–64 (AKSSLQPSLSIET) the composition is skewed to polar residues. A DNA-binding region (nuclear receptor) is located at residues 160-235 (VIPCKVCGDK…LGMSRDAVKF (76 aa)). 2 consecutive NR C4-type zinc fingers follow at residues 163–183 (CKVCGDKSSGVHYGVITCEGC) and 199–223 (CPRQKNCVVDRVNRNRCQYCRLKKC). The 242-residue stretch at 345–586 (PEEDVATRVI…ALYKELFTAD (242 aa)) folds into the NR LBD domain.

It belongs to the nuclear hormone receptor family. NR1 subfamily. Expressed in the germline and oocytes and is a maternal gene product. In males and sperm-producing hermaphrodites, expressed in early pachytene spermatocytes, increasing in level throughout late pachytene. Expression is undetectable in meiotically dividing spermatocytes or mature spermatids.

The protein localises to the nucleus. Functionally, orphan nuclear receptor. Transcription factor. Modulates expression of target genes, such as Period protein homolog lin-42 and microRNA let-7, by binding to hormone response elements (HRE). Involved in promoting oscillatory expression of the primary transcripts of let-7 and paralogous microRNAs miR-48, miR-84, and miR-241. Plays a role in normal development and required to regulate each larval molt. Involved in regulating both the frequency and number of molts, acting as part of a negative feedback loop with the let-7 family of microRNAs, perhaps contributing to a self-sustaining molecular-genetic oscillator. Positively modulates expression of collagen and hedgehog-related genes. Involved in development of the gonad and associated epidermal structures. Required in spermatogenesis, acting following the sperm/oocyte cell fate decision, downstream of the canonical sex-determination pathway. Involved in regulating formation of the sperm-specific fibrous body-membranous organelle (FB-MO) complexes, acting independently of transcription regulator spe-44. The protein is Nuclear hormone receptor family member nhr-23 of Caenorhabditis elegans.